The primary structure comprises 428 residues: Glutamate-1-semialdehyde 2,1-aminomutase 1 (428 aa).

K268 is modified (N6-(pyridoxal phosphate)lysine).

The protein belongs to the class-III pyridoxal-phosphate-dependent aminotransferase family. HemL subfamily. In terms of assembly, homodimer. Pyridoxal 5'-phosphate is required as a cofactor.

It is found in the cytoplasm. It catalyses the reaction (S)-4-amino-5-oxopentanoate = 5-aminolevulinate. The protein operates within porphyrin-containing compound metabolism; protoporphyrin-IX biosynthesis; 5-aminolevulinate from L-glutamyl-tRNA(Glu): step 2/2. This Geobacillus thermodenitrificans (strain NG80-2) protein is Glutamate-1-semialdehyde 2,1-aminomutase 1.